Consider the following 538-residue polypeptide: Tetracenomycin C resistance and export protein (538 aa).

Helical transmembrane passes span 28 to 48 (LLAVAVGVMMVALDSTIVAIA), 65 to 85 (WITNGYLLALAVSLITAGKLG), 100 to 120 (GFAVTSAAIGLSGSVAAIVVF), 126 to 146 (LFGALMQPSALGLLRVTFPPG), 154 to 174 (IWSGVVGASTAAGPIIGGLLV), 181 to 201 (AVFFINVPVGLAALVAGLVIL), 213 to 233 (FDVSGIVLLSGAMFCLVWGLI), 239 to 259 (GWGDLRTLGFLAAAVLAFAGF), 286 to 306 (VLMVLMAFSFIGGLFFVTFYL), 319 to 339 (VHLLPLTGMMIVGAPVSGIVI), 342 to 362 (FGPGGPLVVGMLLTAASLWGM), 371 to 391 (MGITSLWFVLLGLGLAPVMVG), 413 to 433 (QSAMQVGGSLGTAVLGVLMAS), and 494 to 514 (MGLAFTVAGAVALVAAAVALF).

The protein belongs to the major facilitator superfamily. EmrB family.

It is found in the cell membrane. The protein operates within antibiotic biosynthesis; tetracenomycin C biosynthesis. Resistance to tetracenomycin C by an active tetracenomycin C efflux system which is probably energized by transmembrane electrochemical gradients. This is Tetracenomycin C resistance and export protein (tcmA) from Streptomyces glaucescens.